The primary structure comprises 408 residues: Phosphopentomutase (408 aa).

6 residues coordinate Mn(2+): Asp10, Asp307, His312, Asp348, His349, and His360.

Belongs to the phosphopentomutase family. It depends on Mn(2+) as a cofactor.

It is found in the cytoplasm. It catalyses the reaction 2-deoxy-alpha-D-ribose 1-phosphate = 2-deoxy-D-ribose 5-phosphate. It carries out the reaction alpha-D-ribose 1-phosphate = D-ribose 5-phosphate. Its pathway is carbohydrate degradation; 2-deoxy-D-ribose 1-phosphate degradation; D-glyceraldehyde 3-phosphate and acetaldehyde from 2-deoxy-alpha-D-ribose 1-phosphate: step 1/2. In terms of biological role, isomerase that catalyzes the conversion of deoxy-ribose 1-phosphate (dRib-1-P) and ribose 1-phosphate (Rib-1-P) to deoxy-ribose 5-phosphate (dRib-5-P) and ribose 5-phosphate (Rib-5-P), respectively. The polypeptide is Phosphopentomutase (Buchnera aphidicola subsp. Baizongia pistaciae (strain Bp)).